The primary structure comprises 460 residues: Probable carboxypeptidase ARB_01041 (460 aa).

The first 22 residues, 1-22 (MQKTYIWALVSLLASSLVDARS), serve as a signal peptide directing secretion. N-linked (GlcNAc...) asparagine glycosylation is present at Asn-98. Asp-175 contributes to the Zn(2+) binding site. The Proton acceptor role is filled by Glu-207. Glu-208 lines the Zn(2+) pocket. A glycan (N-linked (GlcNAc...) asparagine) is linked at Asn-395.

This sequence belongs to the peptidase M20A family. It depends on Zn(2+) as a cofactor.

It localises to the secreted. This Arthroderma benhamiae (strain ATCC MYA-4681 / CBS 112371) (Trichophyton mentagrophytes) protein is Probable carboxypeptidase ARB_01041.